A 187-amino-acid chain; its full sequence is Photosystem I assembly protein Ycf4 (187 aa).

2 helical membrane-spanning segments follow: residues 23–43 (INYF…IVGI) and 70–90 (FYGI…ILGV).

It belongs to the Ycf4 family.

The protein localises to the plastid. Its subcellular location is the chloroplast thylakoid membrane. Seems to be required for the assembly of the photosystem I complex. This chain is Photosystem I assembly protein Ycf4, found in Chara vulgaris (Common stonewort).